A 403-amino-acid polypeptide reads, in one-letter code: Farnesyl pyrophosphate synthase (403 aa).

The Mg(2+) site is built by aspartate 156 and aspartate 160. A DDXXD motif motif is present at residues aspartate 156–aspartate 160.

It belongs to the FPP/GGPP synthase family. Mg(2+) is required as a cofactor.

The catalysed reaction is isopentenyl diphosphate + (2E)-geranyl diphosphate = (2Z,6E)-farnesyl diphosphate + diphosphate. The protein operates within pheromone biosynthesis. Functionally, farnesyl pyrophosphate synthase involved in pheromone biosynthesis by catalyzing the formation of (2Z,6E)-farnesyl diphosphate. The chain is Farnesyl pyrophosphate synthase from Nezara viridula (Southern green stink bug).